The sequence spans 268 residues: Thiazole synthase (268 aa).

The active-site Schiff-base intermediate with DXP is the lysine 100. 1-deoxy-D-xylulose 5-phosphate is bound by residues glycine 161, 187–188 (AG), and 209–210 (NT). The interval 248-268 (ATPSSPSEGMITGSPHSAANN) is disordered.

This sequence belongs to the ThiG family. In terms of assembly, homotetramer. Forms heterodimers with either ThiH or ThiS.

The protein localises to the cytoplasm. The enzyme catalyses [ThiS sulfur-carrier protein]-C-terminal-Gly-aminoethanethioate + 2-iminoacetate + 1-deoxy-D-xylulose 5-phosphate = [ThiS sulfur-carrier protein]-C-terminal Gly-Gly + 2-[(2R,5Z)-2-carboxy-4-methylthiazol-5(2H)-ylidene]ethyl phosphate + 2 H2O + H(+). It functions in the pathway cofactor biosynthesis; thiamine diphosphate biosynthesis. Catalyzes the rearrangement of 1-deoxy-D-xylulose 5-phosphate (DXP) to produce the thiazole phosphate moiety of thiamine. Sulfur is provided by the thiocarboxylate moiety of the carrier protein ThiS. In vitro, sulfur can be provided by H(2)S. This is Thiazole synthase from Nitrosomonas eutropha (strain DSM 101675 / C91 / Nm57).